Consider the following 264-residue polypeptide: Thymidylate synthase (264 aa).

DUMP-binding positions include Arg-21 and 126-127; that span reads RR. Cys-146 (nucleophile) is an active-site residue. DUMP-binding positions include 166–169, Asn-177, and 207–209; these read RSAD and HLY. Asp-169 contacts (6R)-5,10-methylene-5,6,7,8-tetrahydrofolate. Ala-263 provides a ligand contact to (6R)-5,10-methylene-5,6,7,8-tetrahydrofolate.

The protein belongs to the thymidylate synthase family. Bacterial-type ThyA subfamily. As to quaternary structure, homodimer.

Its subcellular location is the cytoplasm. It catalyses the reaction dUMP + (6R)-5,10-methylene-5,6,7,8-tetrahydrofolate = 7,8-dihydrofolate + dTMP. The protein operates within pyrimidine metabolism; dTTP biosynthesis. In terms of biological role, catalyzes the reductive methylation of 2'-deoxyuridine-5'-monophosphate (dUMP) to 2'-deoxythymidine-5'-monophosphate (dTMP) while utilizing 5,10-methylenetetrahydrofolate (mTHF) as the methyl donor and reductant in the reaction, yielding dihydrofolate (DHF) as a by-product. This enzymatic reaction provides an intracellular de novo source of dTMP, an essential precursor for DNA biosynthesis. In Rhodopseudomonas palustris (strain ATCC BAA-98 / CGA009), this protein is Thymidylate synthase.